A 138-amino-acid chain; its full sequence is NADH dehydrogenase [ubiquinone] 1 alpha subcomplex subunit N7BM (138 aa).

It belongs to the complex I NDUFA12 subunit family. Complex I is composed of 42 different subunits.

Its subcellular location is the mitochondrion inner membrane. Accessory subunit of the mitochondrial membrane respiratory chain NADH dehydrogenase (Complex I), that is believed not to be involved in catalysis. Complex I functions in the transfer of electrons from NADH to the respiratory chain. The immediate electron acceptor for the enzyme is believed to be ubiquinone. This chain is NADH dehydrogenase [ubiquinone] 1 alpha subcomplex subunit N7BM, found in Yarrowia lipolytica (strain CLIB 122 / E 150) (Yeast).